The sequence spans 434 residues: Adenylosuccinate synthetase (434 aa).

GTP is bound by residues 22–28 and 50–52; these read GDEGKGK and GHT. D23 (proton acceptor) is an active-site residue. D23 and G50 together coordinate Mg(2+). Residues 23 to 26, 48 to 51, T139, R153, Q234, T249, and R313 each bind IMP; these read DEGK and NAGH. H51 serves as the catalytic Proton donor. 309-315 provides a ligand contact to substrate; sequence ATTGRKR. GTP contacts are provided by residues R315, 341-343, and 423-425; these read KLD and SVG.

The protein belongs to the adenylosuccinate synthetase family. As to quaternary structure, homodimer. Mg(2+) serves as cofactor.

It is found in the cytoplasm. It catalyses the reaction IMP + L-aspartate + GTP = N(6)-(1,2-dicarboxyethyl)-AMP + GDP + phosphate + 2 H(+). It participates in purine metabolism; AMP biosynthesis via de novo pathway; AMP from IMP: step 1/2. In terms of biological role, plays an important role in the de novo pathway of purine nucleotide biosynthesis. Catalyzes the first committed step in the biosynthesis of AMP from IMP. The sequence is that of Adenylosuccinate synthetase from Pelodictyon phaeoclathratiforme (strain DSM 5477 / BU-1).